The sequence spans 330 residues: Methionyl-tRNA formyltransferase (330 aa).

(6S)-5,6,7,8-tetrahydrofolate is bound at residue 112–115; that stretch reads SLLP.

The protein belongs to the Fmt family.

It catalyses the reaction L-methionyl-tRNA(fMet) + (6R)-10-formyltetrahydrofolate = N-formyl-L-methionyl-tRNA(fMet) + (6S)-5,6,7,8-tetrahydrofolate + H(+). Its function is as follows. Attaches a formyl group to the free amino group of methionyl-tRNA(fMet). The formyl group appears to play a dual role in the initiator identity of N-formylmethionyl-tRNA by promoting its recognition by IF2 and preventing the misappropriation of this tRNA by the elongation apparatus. This chain is Methionyl-tRNA formyltransferase, found in Synechocystis sp. (strain ATCC 27184 / PCC 6803 / Kazusa).